Consider the following 806-residue polypeptide: Ribonucleoside-diphosphate reductase large subunit (806 aa).

One can recognise an ATP-cone domain in the interval 1 to 91; the sequence is MYVLNRKGEE…TDNLHKNTSD (91 aa). ATP contacts are provided by residues 5–6, 11–17, Thr-52, and Asp-56; these read NR and EDISFDQ. Ser-215 provides a ligand contact to GDP. Cys-216 and Cys-442 are oxidised to a cystine. DTTP contacts are provided by residues 224 to 226, Lys-241, Arg-254, and 261 to 262; these read DSI and RG. A GDP-binding site is contributed by Asn-425. Residue Asn-425 is the Proton acceptor of the active site. Cys-427 functions as the Cysteine radical intermediate in the catalytic mechanism. GDP is bound by residues Glu-429 and 604-607; that span reads TAST. The active-site Proton acceptor is the Glu-429.

The protein belongs to the ribonucleoside diphosphate reductase large chain family. Heterodimer of a large and a small subunit.

It catalyses the reaction a 2'-deoxyribonucleoside 5'-diphosphate + [thioredoxin]-disulfide + H2O = a ribonucleoside 5'-diphosphate + [thioredoxin]-dithiol. With respect to regulation, under complex allosteric control mediated by deoxynucleoside triphosphates and ATP binding to separate specificity and activation sites on the large subunit. The type of nucleotide bound at the specificity site determines substrate preference. It seems probable that ATP makes the enzyme reduce CDP and UDP, dGTP favors ADP reduction and dTTP favors GDP reduction. Stimulated by ATP and inhibited by dATP binding to the activity site. Functionally, provides the precursors necessary for DNA synthesis. Catalyzes the biosynthesis of deoxyribonucleotides from the corresponding ribonucleotides. The chain is Ribonucleoside-diphosphate reductase large subunit (RNR1) from Plasmodium falciparum (isolate Dd2).